A 379-amino-acid polypeptide reads, in one-letter code: Heme chaperone HemW (379 aa).

The Radical SAM core domain occupies 1 to 232 (MLQKPNSAYF…MDILAKNGYN (232 aa)). Y9 provides a ligand contact to S-adenosyl-L-methionine. Residues C15, C19, and C22 each contribute to the [4Fe-4S] cluster site. Residues G60, 61 to 62 (GT), E93, Q120, R132, and D157 contribute to the S-adenosyl-L-methionine site.

It belongs to the anaerobic coproporphyrinogen-III oxidase family. HemW subfamily. As to quaternary structure, homodimer.

It localises to the cytoplasm. Its subcellular location is the cell membrane. Its function is as follows. Could serve in the delivery of heme to a membrane-localized target protein. Binds one molecule of heme per monomer, possibly covalently; heme and Fe-S cluster binding are independent. Incubation with the reductant sodium dithionite increases binding. Does not have coproporphyrinogen III dehydrogenase activity in vitro, does not complement an E.coli hemN deletion in vivo. Binds 1 Fe-S cluster, it is probably [4Fe-4S]. The cluster is coordinated with 3 cysteines and an exchangeable S-adenosyl-L-methionine; only dimeric protein has the cluster. This is Heme chaperone HemW from Lactococcus lactis subsp. lactis (strain IL1403) (Streptococcus lactis).